A 172-amino-acid chain; its full sequence is Keratin-associated protein 13-1 (172 aa).

Repeat copies occupy residues 46-55 (CQLGSSLYRG), 56-65 (CQQTCWEPTS), 66-75 (CQTSYVESSP), 76-85 (CQTSCYRPRT), and 92-101 (CQTTYSGSLG). Residues 46-101 (CQLGSSLYRGCQQTCWEPTSCQTSYVESSPCQTSCYRPRTSLLCSPCQTTYSGSLG) are 5 X 10 AA approximate repeats.

This sequence belongs to the PMG family. Interacts with hair keratins. In terms of tissue distribution, weak expression seen in the late matrix and entire cortex area of the hair follicle.

Functionally, in the hair cortex, hair keratin intermediate filaments are embedded in an interfilamentous matrix, consisting of hair keratin-associated proteins (KRTAP), which are essential for the formation of a rigid and resistant hair shaft through their extensive disulfide bond cross-linking with abundant cysteine residues of hair keratins. The matrix proteins include the high-sulfur and high-glycine-tyrosine keratins. The protein is Keratin-associated protein 13-1 (KRTAP13-1) of Homo sapiens (Human).